We begin with the raw amino-acid sequence, 88 residues long: Small ribosomal subunit protein uS17 (88 aa).

Belongs to the universal ribosomal protein uS17 family. Part of the 30S ribosomal subunit.

In terms of biological role, one of the primary rRNA binding proteins, it binds specifically to the 5'-end of 16S ribosomal RNA. The chain is Small ribosomal subunit protein uS17 from Lawsonia intracellularis (strain PHE/MN1-00).